We begin with the raw amino-acid sequence, 286 residues long: Tyrosine recombinase XerA (286 aa).

Residues 5–82 form the Core-binding (CB) domain; the sequence is TLRSEVLEEF…ALKAYFKFEG (78 aa). In terms of domain architecture, Tyr recombinase spans 98–274; sequence TLPKSLTEEE…TAKHLKEAVE (177 aa). Active-site residues include Arg135, Lys160, His226, Arg229, and His252. The active-site O-(3'-phospho-DNA)-tyrosine intermediate is Tyr261.

The protein belongs to the 'phage' integrase family. XerA subfamily.

The protein localises to the cytoplasm. In terms of biological role, site-specific tyrosine recombinase, which acts by catalyzing the cutting and rejoining of the recombining DNA molecules. The protein is Tyrosine recombinase XerA of Pyrococcus furiosus (strain ATCC 43587 / DSM 3638 / JCM 8422 / Vc1).